Here is a 97-residue protein sequence, read N- to C-terminus: Peptide Y (97 aa).

The first 28 residues, methionine 1 to alanine 28, serve as a signal peptide directing secretion. Tyrosine 64 is modified (tyrosine amide). Positions serine 68–tryptophan 97 are cleaved as a propeptide — C-terminal extension.

It belongs to the NPY family.

The protein localises to the secreted. This is Peptide Y from Dicentrarchus labrax (European seabass).